Consider the following 477-residue polypeptide: V-type ATP synthase beta chain (477 aa).

The protein belongs to the ATPase alpha/beta chains family.

Functionally, produces ATP from ADP in the presence of a proton gradient across the membrane. The V-type beta chain is a regulatory subunit. This chain is V-type ATP synthase beta chain, found in Anaeromyxobacter sp. (strain K).